The following is a 353-amino-acid chain: UDP-N-acetylglucosamine--N-acetylmuramyl-(pentapeptide) pyrophosphoryl-undecaprenol N-acetylglucosamine transferase (353 aa).

UDP-N-acetyl-alpha-D-glucosamine-binding positions include 10–12, N124, S183, and Q283; that span reads TGG.

The protein belongs to the glycosyltransferase 28 family. MurG subfamily.

The protein resides in the cell inner membrane. The catalysed reaction is di-trans,octa-cis-undecaprenyl diphospho-N-acetyl-alpha-D-muramoyl-L-alanyl-D-glutamyl-meso-2,6-diaminopimeloyl-D-alanyl-D-alanine + UDP-N-acetyl-alpha-D-glucosamine = di-trans,octa-cis-undecaprenyl diphospho-[N-acetyl-alpha-D-glucosaminyl-(1-&gt;4)]-N-acetyl-alpha-D-muramoyl-L-alanyl-D-glutamyl-meso-2,6-diaminopimeloyl-D-alanyl-D-alanine + UDP + H(+). The protein operates within cell wall biogenesis; peptidoglycan biosynthesis. Cell wall formation. Catalyzes the transfer of a GlcNAc subunit on undecaprenyl-pyrophosphoryl-MurNAc-pentapeptide (lipid intermediate I) to form undecaprenyl-pyrophosphoryl-MurNAc-(pentapeptide)GlcNAc (lipid intermediate II). This chain is UDP-N-acetylglucosamine--N-acetylmuramyl-(pentapeptide) pyrophosphoryl-undecaprenol N-acetylglucosamine transferase, found in Helicobacter pylori (strain HPAG1).